Here is a 496-residue protein sequence, read N- to C-terminus: Alanine aminotransferase 1 (496 aa).

Position 2 is an N-acetylalanine (A2). At T22 the chain carries Phosphothreonine. K314 is subject to N6-(pyridoxal phosphate)lysine.

Belongs to the class-I pyridoxal-phosphate-dependent aminotransferase family. Alanine aminotransferase subfamily. As to quaternary structure, homodimer. Pyridoxal 5'-phosphate is required as a cofactor. In terms of tissue distribution, liver, heart, skeletal muscle, etc.

The protein resides in the cytoplasm. The catalysed reaction is L-alanine + 2-oxoglutarate = pyruvate + L-glutamate. It participates in amino-acid degradation; L-alanine degradation via transaminase pathway; pyruvate from L-alanine: step 1/1. Its function is as follows. Catalyzes the reversible transamination between alanine and 2-oxoglutarate to form pyruvate and glutamate. Participates in cellular nitrogen metabolism and also in liver gluconeogenesis starting with precursors transported from skeletal muscles. This chain is Alanine aminotransferase 1 (Gpt), found in Rattus norvegicus (Rat).